A 410-amino-acid polypeptide reads, in one-letter code: Polyadenylation and cleavage factor homolog 5 (410 aa).

The segment covering 1-17 has biased composition (polar residues); that stretch reads MASNGSFSAQRNANAGT. Residues 1 to 32 form a disordered region; sequence MASNGSFSAQRNANAGTTMKRRNDNRGYGGGI. Residues 191–214 adopt a coiled-coil conformation; that stretch reads SKELTDLLSLLNNEKEKKTSEASN. The C2H2-type zinc-finger motif lies at 247–269; sequence RQCTSCGVRFKCQEEHSKHMDWH.

As to quaternary structure, forms a complex with cleavage and polyadenylation specificity factor (CPSF) subunits CSTF77, CLPS3, PCFS4 and PCFS1.

Its subcellular location is the nucleus. This chain is Polyadenylation and cleavage factor homolog 5, found in Arabidopsis thaliana (Mouse-ear cress).